The primary structure comprises 236 residues: 1-(5-phosphoribosyl)-5-[(5-phosphoribosylamino)methylideneamino] imidazole-4-carboxamide isomerase (236 aa).

The Proton acceptor role is filled by aspartate 8. The active-site Proton donor is the aspartate 129.

It belongs to the HisA/HisF family.

It localises to the cytoplasm. It catalyses the reaction 1-(5-phospho-beta-D-ribosyl)-5-[(5-phospho-beta-D-ribosylamino)methylideneamino]imidazole-4-carboxamide = 5-[(5-phospho-1-deoxy-D-ribulos-1-ylimino)methylamino]-1-(5-phospho-beta-D-ribosyl)imidazole-4-carboxamide. The protein operates within amino-acid biosynthesis; L-histidine biosynthesis; L-histidine from 5-phospho-alpha-D-ribose 1-diphosphate: step 4/9. The sequence is that of 1-(5-phosphoribosyl)-5-[(5-phosphoribosylamino)methylideneamino] imidazole-4-carboxamide isomerase from Methanosphaerula palustris (strain ATCC BAA-1556 / DSM 19958 / E1-9c).